Here is a 368-residue protein sequence, read N- to C-terminus: Agmatine deiminase (368 aa).

The Amidino-cysteine intermediate role is filled by cysteine 357.

Belongs to the agmatine deiminase family. In terms of assembly, homodimer.

The catalysed reaction is agmatine + H2O = N-carbamoylputrescine + NH4(+). Its pathway is amine and polyamine biosynthesis; putrescine biosynthesis via agmatine pathway; N-carbamoylputrescine from agmatine: step 1/1. Functionally, mediates the hydrolysis of agmatine into N-carbamoylputrescine in the arginine decarboxylase (ADC) pathway of putrescine biosynthesis, a basic polyamine. The polypeptide is Agmatine deiminase (Pseudomonas putida (strain ATCC 700007 / DSM 6899 / JCM 31910 / BCRC 17059 / LMG 24140 / F1)).